Reading from the N-terminus, the 277-residue chain is Undecaprenyl-diphosphatase (277 aa).

6 helical membrane passes run 88 to 108 (MGWLVILGSLPIIVLGLLFQD), 117 to 137 (MWIVATMLIVFGLILAVADAV), 157 to 179 (FAQAMALIPGVSRSGGTITAGLL), 191 to 211 (SFLLAIPAVFGSGLYQLYKVV), 227 to 247 (LATVIAFVVGYVIIGWFLKFV), and 255 to 275 (FVWYRIFLGLALYLLLGFGVI).

It belongs to the UppP family.

The protein resides in the cell membrane. It catalyses the reaction di-trans,octa-cis-undecaprenyl diphosphate + H2O = di-trans,octa-cis-undecaprenyl phosphate + phosphate + H(+). Catalyzes the dephosphorylation of undecaprenyl diphosphate (UPP). Confers resistance to bacitracin. This chain is Undecaprenyl-diphosphatase, found in Pseudarthrobacter chlorophenolicus (strain ATCC 700700 / DSM 12829 / CIP 107037 / JCM 12360 / KCTC 9906 / NCIMB 13794 / A6) (Arthrobacter chlorophenolicus).